The sequence spans 1033 residues: Tyrosine-protein kinase-like otk (1033 aa).

The signal sequence occupies residues 1 to 22; sequence MTARMISIYGLVLASMMASVWA. Over 23–581 the chain is Extracellular; sequence SSSRFQRLPQ…GGDGFLVTRA (559 aa). 5 Ig-like C2-type domains span residues 25 to 108, 109 to 199, 251 to 365, 368 to 463, and 468 to 558; these read SRFQ…REAS, PPAK…RVMS, PEDL…LPIS, PGVL…VAIN, and PKFS…VQLV. N-linked (GlcNAc...) asparagine glycosylation occurs at Asn39. Cystine bridges form between Cys46-Cys95, Cys137-Cys188, Cys276-Cys354, and Cys399-Cys447. 7 N-linked (GlcNAc...) asparagine glycosylation sites follow: Asn336, Asn417, Asn429, Asn444, Asn457, Asn512, and Asn524. Cys490 and Cys542 are oxidised to a cystine. A helical transmembrane segment spans residues 582 to 602; the sequence is VLITMTVALAYIVLVVGLMLW. Topologically, residues 603–1033 are cytoplasmic; sequence CRYRRQARKA…LSKAMQSVEK (431 aa). 2 disordered regions span residues 617–679 and 718–760; these read LSTK…KKSA and SPTD…KTSM. Polar residues predominate over residues 655-673; it reads KSSGDAQKSDDTACSQQSR. Position 678 is a phosphoserine (Ser678). In terms of domain architecture, Protein kinase; inactive spans 692–1028; the sequence is LSELIQIGRG…QLGAALSKAM (337 aa). Over residues 720–731 the composition is skewed to basic and acidic residues; sequence TDKDADTEKQHS.

Belongs to the protein kinase superfamily. Tyr protein kinase family. Insulin receptor subfamily. In terms of assembly, interacts with plexA; component of a receptor complex that mediates the repulsive signaling in response to Semaphorin ligands.

It is found in the cell membrane. Its function is as follows. Acts as a calcium-dependent, homophilic cell adhesion molecule that regulates neural recognition during the development of the nervous system. Component of the repulsive Plexin signaling response to regulate motor axon guidance at the embryonic stage. Also component of a receptor complex that is required in the adult visual system to innervate the lamina layer; specific targeting of R1-R6 axons. This is Tyrosine-protein kinase-like otk from Drosophila erecta (Fruit fly).